The sequence spans 503 residues: Cytochrome c-552 (503 aa).

The first 16 residues, 1-16 (MKKNTIILVGALIAIA), serve as a signal peptide directing secretion. H102 serves as a coordination point for heme c. Residues C130, C133, and K134 each contribute to the heme site. Heme c contacts are provided by C168, C171, H172, C210, C213, and H214. 4 residues coordinate Ca(2+): E216, Y217, K273, and Q275. Y217 provides a ligand contact to substrate. H276 serves as a coordination point for substrate. Positions 287, 294, 297, 298, 312, 325, 328, 329, and 404 each coordinate heme c.

Belongs to the cytochrome c-552 family. Ca(2+) serves as cofactor. It depends on heme c as a cofactor.

It is found in the periplasm. It carries out the reaction 6 Fe(III)-[cytochrome c] + NH4(+) + 2 H2O = 6 Fe(II)-[cytochrome c] + nitrite + 8 H(+). Its pathway is nitrogen metabolism; nitrate reduction (assimilation). Its function is as follows. Catalyzes the reduction of nitrite to ammonia, consuming six electrons in the process. In Maridesulfovibrio salexigens (strain ATCC 14822 / DSM 2638 / NCIMB 8403 / VKM B-1763) (Desulfovibrio salexigens), this protein is Cytochrome c-552.